The sequence spans 311 residues: Methionyl-tRNA formyltransferase (311 aa).

110-113 (SLLP) provides a ligand contact to (6S)-5,6,7,8-tetrahydrofolate.

Belongs to the Fmt family.

It carries out the reaction L-methionyl-tRNA(fMet) + (6R)-10-formyltetrahydrofolate = N-formyl-L-methionyl-tRNA(fMet) + (6S)-5,6,7,8-tetrahydrofolate + H(+). Functionally, attaches a formyl group to the free amino group of methionyl-tRNA(fMet). The formyl group appears to play a dual role in the initiator identity of N-formylmethionyl-tRNA by promoting its recognition by IF2 and preventing the misappropriation of this tRNA by the elongation apparatus. The protein is Methionyl-tRNA formyltransferase of Streptococcus uberis (strain ATCC BAA-854 / 0140J).